The chain runs to 310 residues: Porphobilinogen deaminase (310 aa).

An S-(dipyrrolylmethanemethyl)cysteine modification is found at C243.

It belongs to the HMBS family. Monomer. Requires dipyrromethane as cofactor.

The catalysed reaction is 4 porphobilinogen + H2O = hydroxymethylbilane + 4 NH4(+). It functions in the pathway porphyrin-containing compound metabolism; protoporphyrin-IX biosynthesis; coproporphyrinogen-III from 5-aminolevulinate: step 2/4. Functionally, tetrapolymerization of the monopyrrole PBG into the hydroxymethylbilane pre-uroporphyrinogen in several discrete steps. In Mannheimia succiniciproducens (strain KCTC 0769BP / MBEL55E), this protein is Porphobilinogen deaminase.